The following is a 360-amino-acid chain: Aminomethyltransferase (360 aa).

Belongs to the GcvT family. The glycine cleavage system is composed of four proteins: P, T, L and H.

It catalyses the reaction N(6)-[(R)-S(8)-aminomethyldihydrolipoyl]-L-lysyl-[protein] + (6S)-5,6,7,8-tetrahydrofolate = N(6)-[(R)-dihydrolipoyl]-L-lysyl-[protein] + (6R)-5,10-methylene-5,6,7,8-tetrahydrofolate + NH4(+). In terms of biological role, the glycine cleavage system catalyzes the degradation of glycine. This is Aminomethyltransferase from Legionella pneumophila (strain Lens).